The chain runs to 276 residues: Putative metal-binding protein TC_0696 (276 aa).

Residues 1–18 form the signal peptide; it reads MRLLILLLFSFGIIYSHG. 4 residues coordinate a divalent metal cation: His-59, His-121, His-185, and Asp-256.

Belongs to the bacterial solute-binding protein 9 family.

It is found in the periplasm. In terms of biological role, part of an ATP-binding cassette (ABC) transport system involved in metal import. Binds a metal with high affinity and specificity and delivers it to the membrane permease for translocation into the cytoplasm. The protein is Putative metal-binding protein TC_0696 of Chlamydia muridarum (strain MoPn / Nigg).